We begin with the raw amino-acid sequence, 115 residues long: Large ribosomal subunit protein uL18 (115 aa).

The disordered stretch occupies residues 1–20 (MKYTKQEARKRRHYRVRSKV). Positions 8–18 (ARKRRHYRVRS) are enriched in basic residues.

It belongs to the universal ribosomal protein uL18 family. In terms of assembly, part of the 50S ribosomal subunit; part of the 5S rRNA/L5/L18/L25 subcomplex. Contacts the 5S and 23S rRNAs.

This is one of the proteins that bind and probably mediate the attachment of the 5S RNA into the large ribosomal subunit, where it forms part of the central protuberance. In Mesoplasma florum (strain ATCC 33453 / NBRC 100688 / NCTC 11704 / L1) (Acholeplasma florum), this protein is Large ribosomal subunit protein uL18.